Consider the following 562-residue polypeptide: Septation ring formation regulator EzrA (562 aa).

At 1-2 (ME) the chain is on the extracellular side. The chain crosses the membrane as a helical span at residues 3–21 (FVIGLLIVLLALFAAGYFF). Over 22–562 (RKKIYAEIDR…VEKIKADISA (541 aa)) the chain is Cytoplasmic. 2 coiled-coil regions span residues 377–425 (YSLL…LKKT) and 470–497 (MEEA…LVEQ).

Belongs to the EzrA family. May be degraded by FtsH protease.

The protein localises to the cell membrane. The protein resides in the membrane raft. In terms of biological role, negative regulator of FtsZ ring formation; modulates the frequency and position of FtsZ ring formation. Inhibits FtsZ ring formation at polar sites. Interacts either with FtsZ or with one of its binding partners to promote depolymerization. The protein is Septation ring formation regulator EzrA of Bacillus subtilis (strain 168).